The primary structure comprises 229 residues: Response regulator SaeR (229 aa).

A Response regulatory domain is found at H3–L116. D51 carries the 4-aspartylphosphate modification. Positions I128–R227 form a DNA-binding region, ompR/PhoB-type.

Post-translationally, phosphorylated by SaeS.

The protein resides in the cytoplasm. Member of the two-component regulatory system SaeR/SaeS. Probably functions as a transcriptional regulator via a specific DNA-binding domain, recognizing motifs near the promoter sequences of target genes. The polypeptide is Response regulator SaeR (saeR) (Staphylococcus epidermidis (strain ATCC 35984 / DSM 28319 / BCRC 17069 / CCUG 31568 / BM 3577 / RP62A)).